The following is a 142-amino-acid chain: Putative pre-16S rRNA nuclease (142 aa).

The protein belongs to the YqgF nuclease family.

The protein resides in the cytoplasm. In terms of biological role, could be a nuclease involved in processing of the 5'-end of pre-16S rRNA. In Azotobacter vinelandii (strain DJ / ATCC BAA-1303), this protein is Putative pre-16S rRNA nuclease.